The sequence spans 325 residues: Glutarate 2-hydroxylase (325 aa).

His160, Asp162, and His292 together coordinate Fe cation.

The protein belongs to the glutarate hydroxylase family. In terms of assembly, homotetramer. The cofactor is Fe(2+).

The enzyme catalyses glutarate + 2-oxoglutarate + O2 = (S)-2-hydroxyglutarate + succinate + CO2. It functions in the pathway amino-acid degradation. Acts as an alpha-ketoglutarate-dependent dioxygenase catalyzing hydroxylation of glutarate (GA) to L-2-hydroxyglutarate (L2HG). Functions in a L-lysine degradation pathway that proceeds via cadaverine, glutarate and L-2-hydroxyglutarate. The chain is Glutarate 2-hydroxylase from Salmonella typhimurium (strain SL1344).